A 239-amino-acid chain; its full sequence is MVIKAQSPAGFAEEYIIESIWNNRFPPGTILPAERELSELIGVTRTTLREVLQRLARDGWLTIQHGKPTKVNNFWETSGLNILETVARLDHQSVPQLIDNLLSVRTNIAAIFIRAAVRNHPEAAQEVLAKATQVEDQADAFNLLDYEIFRGLAFASGNPIYGLIFNGLKGLYTRVGRYYFSNPESRKLALTFYSKLSTLCHEKSYDQVMDCVRNYGKDSGAIWQSMQGTMPSDLTEARR.

Residues 6-74 (QSPAGFAEEY…HGKPTKVNNF (69 aa)) form the HTH gntR-type domain. Residues 34–53 (ERELSELIGVTRTTLREVLQ) constitute a DNA-binding region (H-T-H motif).

In terms of assembly, homodimer.

It localises to the cytoplasm. Functionally, multifunctional regulator of fatty acid metabolism. The polypeptide is Fatty acid metabolism regulator protein (Serratia proteamaculans (strain 568)).